The sequence spans 211 residues: Large ribosomal subunit protein uL3 (211 aa).

This sequence belongs to the universal ribosomal protein uL3 family. As to quaternary structure, part of the 50S ribosomal subunit. Forms a cluster with proteins L14 and L19.

Functionally, one of the primary rRNA binding proteins, it binds directly near the 3'-end of the 23S rRNA, where it nucleates assembly of the 50S subunit. The chain is Large ribosomal subunit protein uL3 from Citrifermentans bemidjiense (strain ATCC BAA-1014 / DSM 16622 / JCM 12645 / Bem) (Geobacter bemidjiensis).